A 269-amino-acid polypeptide reads, in one-letter code: uncharacterized protein (269 aa).

An ATP-binding site is contributed by 103–110 (GIFTMGKS).

This is an uncharacterized protein from Mycoplasma pneumoniae (strain ATCC 29342 / M129 / Subtype 1) (Mycoplasmoides pneumoniae).